A 323-amino-acid polypeptide reads, in one-letter code: Peridinin-chlorophyll a-binding protein 3 (323 aa).

2 consecutive repeat copies span residues 1–173 and 174–323.

As to quaternary structure, homotrimer.

It localises to the plastid. The protein localises to the chloroplast. Its function is as follows. Water-soluble antenna for capture of solar energy in the blue-green range. Peridinin is an asymmetric carotenoid. This chain is Peridinin-chlorophyll a-binding protein 3, found in Amphidinium carterae (Dinoflagellate).